The chain runs to 147 residues: Ribonuclease P protein component (147 aa).

Positions 117–147 (TRPRGQSSHRTRASREATSAHTTAVGEQPTQ) are disordered.

Belongs to the RnpA family. As to quaternary structure, consists of a catalytic RNA component (M1 or rnpB) and a protein subunit.

It catalyses the reaction Endonucleolytic cleavage of RNA, removing 5'-extranucleotides from tRNA precursor.. Its function is as follows. RNaseP catalyzes the removal of the 5'-leader sequence from pre-tRNA to produce the mature 5'-terminus. It can also cleave other RNA substrates such as 4.5S RNA. The protein component plays an auxiliary but essential role in vivo by binding to the 5'-leader sequence and broadening the substrate specificity of the ribozyme. The chain is Ribonuclease P protein component from Thermobifida fusca (strain YX).